A 741-amino-acid polypeptide reads, in one-letter code: NAD(P)H-quinone oxidoreductase subunit 5, chloroplastic (741 aa).

Helical transmembrane passes span Trp9 to Phe29, Trp40 to Leu60, Ile89 to Ile109, Phe124 to Leu144, Ile147 to Thr167, Gly185 to Phe205, Ile218 to Val238, Thr258 to Ala278, Ala286 to Ala306, Leu327 to Ile347, Ala354 to Cys374, Gly395 to Trp415, Tyr427 to Phe447, Phe550 to Phe570, Phe601 to Ile621, Ile651 to Ile671, Trp687 to Met707, and Ile719 to Phe739.

Belongs to the complex I subunit 5 family. In terms of assembly, NDH is composed of at least 16 different subunits, 5 of which are encoded in the nucleus.

It localises to the plastid. The protein resides in the chloroplast thylakoid membrane. It catalyses the reaction a plastoquinone + NADH + (n+1) H(+)(in) = a plastoquinol + NAD(+) + n H(+)(out). The catalysed reaction is a plastoquinone + NADPH + (n+1) H(+)(in) = a plastoquinol + NADP(+) + n H(+)(out). Its function is as follows. NDH shuttles electrons from NAD(P)H:plastoquinone, via FMN and iron-sulfur (Fe-S) centers, to quinones in the photosynthetic chain and possibly in a chloroplast respiratory chain. The immediate electron acceptor for the enzyme in this species is believed to be plastoquinone. Couples the redox reaction to proton translocation, and thus conserves the redox energy in a proton gradient. The polypeptide is NAD(P)H-quinone oxidoreductase subunit 5, chloroplastic (ndhF) (Cryptomeria japonica (Japanese cedar)).